We begin with the raw amino-acid sequence, 905 residues long: DNA mismatch repair protein MutS (905 aa).

Residues 272-292 are disordered; it reads KKPPLSPPSREATGSTMAIDP. 654 to 661 contributes to the ATP binding site; that stretch reads GPNMAGKS.

This sequence belongs to the DNA mismatch repair MutS family.

This protein is involved in the repair of mismatches in DNA. It is possible that it carries out the mismatch recognition step. This protein has a weak ATPase activity. The sequence is that of DNA mismatch repair protein MutS from Rhodopseudomonas palustris (strain BisB18).